A 509-amino-acid polypeptide reads, in one-letter code: Membrane-bound lytic murein transglycosylase F (509 aa).

The first 40 residues, 1 to 40 (MLASACTHSWRTGRFLNRIIKSSVQTLTAAALIANLSACS), serve as a signal peptide directing secretion. Residues 41-280 (RPTTLEKIEQ…YLQERYFGHV (240 aa)) form a non-LT domain region. Residues 281-509 (NQLNYVGART…APFRVTPPML (229 aa)) are LT domain. The active site involves Glu327. The segment at 474-500 (DGSVAQNEDAPTTGADGTTEETPAIPA) is disordered.

In the N-terminal section; belongs to the bacterial solute-binding protein 3 family. This sequence in the C-terminal section; belongs to the transglycosylase Slt family.

Its subcellular location is the cell outer membrane. It catalyses the reaction Exolytic cleavage of the (1-&gt;4)-beta-glycosidic linkage between N-acetylmuramic acid (MurNAc) and N-acetylglucosamine (GlcNAc) residues in peptidoglycan, from either the reducing or the non-reducing ends of the peptidoglycan chains, with concomitant formation of a 1,6-anhydrobond in the MurNAc residue.. Functionally, murein-degrading enzyme that degrades murein glycan strands and insoluble, high-molecular weight murein sacculi, with the concomitant formation of a 1,6-anhydromuramoyl product. Lytic transglycosylases (LTs) play an integral role in the metabolism of the peptidoglycan (PG) sacculus. Their lytic action creates space within the PG sacculus to allow for its expansion as well as for the insertion of various structures such as secretion systems and flagella. This is Membrane-bound lytic murein transglycosylase F from Hahella chejuensis (strain KCTC 2396).